We begin with the raw amino-acid sequence, 308 residues long: Aspartate carbamoyltransferase catalytic subunit (308 aa).

Residues Arg57 and Thr58 each coordinate carbamoyl phosphate. Residue Lys86 participates in L-aspartate binding. Carbamoyl phosphate-binding residues include Arg107, His135, and Gln138. L-aspartate-binding residues include Arg167 and Arg228. Carbamoyl phosphate-binding residues include Leu267 and Pro268.

This sequence belongs to the aspartate/ornithine carbamoyltransferase superfamily. ATCase family. In terms of assembly, heterooligomer of catalytic and regulatory chains.

The enzyme catalyses carbamoyl phosphate + L-aspartate = N-carbamoyl-L-aspartate + phosphate + H(+). It functions in the pathway pyrimidine metabolism; UMP biosynthesis via de novo pathway; (S)-dihydroorotate from bicarbonate: step 2/3. In terms of biological role, catalyzes the condensation of carbamoyl phosphate and aspartate to form carbamoyl aspartate and inorganic phosphate, the committed step in the de novo pyrimidine nucleotide biosynthesis pathway. This Methanococcoides burtonii (strain DSM 6242 / NBRC 107633 / OCM 468 / ACE-M) protein is Aspartate carbamoyltransferase catalytic subunit.